A 161-amino-acid polypeptide reads, in one-letter code: MPSFDVVSELDKHEVQNAVDNAIKELDRRYDLKGKGTFEFKDKEQTVMLTAEEEFQLEAMLEILRLALVKRKIDVKCLETKDPYASGKEKKQEAKFREGIDKDLAKKIVATIKDGKLKVQAAIQGEQVRVTGKKRDDLQEAIALLRTKEFDMPLQFNNFRD.

This sequence belongs to the YajQ family.

Functionally, nucleotide-binding protein. This chain is Nucleotide-binding protein Pput_4372, found in Pseudomonas putida (strain ATCC 700007 / DSM 6899 / JCM 31910 / BCRC 17059 / LMG 24140 / F1).